The chain runs to 545 residues: Methionine--tRNA ligase (545 aa).

A 'HIGH' region motif is present at residues 12-22; sequence PYANGSLHIGH. Cys-143, Cys-146, Cys-156, and Cys-159 together coordinate Zn(2+). The short motif at 329–333 is the 'KMSKS' region element; that stretch reads KLSKS. Lys-332 provides a ligand contact to ATP.

The protein belongs to the class-I aminoacyl-tRNA synthetase family. MetG type 1 subfamily. In terms of assembly, monomer. The cofactor is Zn(2+).

It is found in the cytoplasm. The catalysed reaction is tRNA(Met) + L-methionine + ATP = L-methionyl-tRNA(Met) + AMP + diphosphate. Is required not only for elongation of protein synthesis but also for the initiation of all mRNA translation through initiator tRNA(fMet) aminoacylation. The chain is Methionine--tRNA ligase (metG) from Buchnera aphidicola subsp. Baizongia pistaciae (strain Bp).